The chain runs to 140 residues: Nucleoside diphosphate kinase (140 aa).

ATP-binding residues include Lys-11, Phe-59, Arg-87, Thr-93, Arg-104, and Asn-114. The active-site Pros-phosphohistidine intermediate is His-117.

It belongs to the NDK family. As to quaternary structure, homotetramer. The cofactor is Mg(2+).

It is found in the cytoplasm. It catalyses the reaction a 2'-deoxyribonucleoside 5'-diphosphate + ATP = a 2'-deoxyribonucleoside 5'-triphosphate + ADP. The enzyme catalyses a ribonucleoside 5'-diphosphate + ATP = a ribonucleoside 5'-triphosphate + ADP. In terms of biological role, major role in the synthesis of nucleoside triphosphates other than ATP. The ATP gamma phosphate is transferred to the NDP beta phosphate via a ping-pong mechanism, using a phosphorylated active-site intermediate. The polypeptide is Nucleoside diphosphate kinase (Brucella canis (strain ATCC 23365 / NCTC 10854 / RM-666)).